A 160-amino-acid chain; its full sequence is Cytochrome b6-f complex subunit 4 (160 aa).

3 helical membrane-spanning segments follow: residues 36-56, 95-115, and 131-151; these read LLYM…GLAV, LLGV…PFIE, and TVFL…TLPI.

The protein belongs to the cytochrome b family. PetD subfamily. The 4 large subunits of the cytochrome b6-f complex are cytochrome b6, subunit IV (17 kDa polypeptide, petD), cytochrome f and the Rieske protein, while the 4 small subunits are petG, petL, petM and petN. The complex functions as a dimer.

It is found in the plastid. The protein resides in the chloroplast thylakoid membrane. In terms of biological role, component of the cytochrome b6-f complex, which mediates electron transfer between photosystem II (PSII) and photosystem I (PSI), cyclic electron flow around PSI, and state transitions. This Nephroselmis olivacea (Green alga) protein is Cytochrome b6-f complex subunit 4.